The primary structure comprises 154 residues: Peptide methionine sulfoxide reductase MsrB (154 aa).

In terms of domain architecture, MsrB spans 28-150; sequence DQQWREQLSE…NSVSLIFNKI (123 aa). 4 residues coordinate Zn(2+): cysteine 67, cysteine 70, cysteine 116, and cysteine 119. Catalysis depends on cysteine 139, which acts as the Nucleophile.

It belongs to the MsrB Met sulfoxide reductase family. Zn(2+) serves as cofactor.

It catalyses the reaction L-methionyl-[protein] + [thioredoxin]-disulfide + H2O = L-methionyl-(R)-S-oxide-[protein] + [thioredoxin]-dithiol. This Vibrio vulnificus (strain YJ016) protein is Peptide methionine sulfoxide reductase MsrB.